A 74-amino-acid chain; its full sequence is Putative antitoxin VapB48 (74 aa).

Functionally, possibly the antitoxin component of a type II toxin-antitoxin (TA) system. Its cognate toxin is VapC48 (Potential). The sequence is that of Putative antitoxin VapB48 (vapB48) from Mycobacterium tuberculosis (strain CDC 1551 / Oshkosh).